The chain runs to 323 residues: Sphingolipid delta(4)-desaturase/C4-monooxygenase DES2 (323 aa).

G2 is lipidated: N-myristoyl glycine. 2 helical membrane-spanning segments follow: residues 41–61 (PNIK…CWLV) and 68–88 (WLLF…TLAI). Positions 89 to 93 (HDISH) match the Histidine box-1 motif. The tract at residues 95–99 (TAFGT) is required for C4-hydroxylase activity. Positions 128 to 132 (HVDHH) match the Histidine box-2 motif. The chain crosses the membrane as a helical span at residues 200–220 (IFALWGIKAIVYLLASSLLGL). Positions 259–263 (HVEHH) match the Histidine box-3 motif.

This sequence belongs to the fatty acid desaturase type 1 family. DEGS subfamily.

It localises to the endoplasmic reticulum membrane. The enzyme catalyses a dihydroceramide + 2 Fe(II)-[cytochrome b5] + O2 + 2 H(+) = a phytoceramide + 2 Fe(III)-[cytochrome b5] + H2O. It catalyses the reaction an N-acylsphinganine + 2 Fe(II)-[cytochrome b5] + O2 + 2 H(+) = an N-acylsphing-4-enine + 2 Fe(III)-[cytochrome b5] + 2 H2O. It carries out the reaction N-octanoylsphinganine + 2 Fe(II)-[cytochrome b5] + O2 + 2 H(+) = N-octanoyl-4-hydroxysphinganine + 2 Fe(III)-[cytochrome b5] + H2O. The catalysed reaction is an N-acylsphinganine + 2 Fe(II)-[cytochrome b5] + O2 + 2 H(+) = an N-acyl-(4R)-4-hydroxysphinganine + 2 Fe(III)-[cytochrome b5] + H2O. It functions in the pathway membrane lipid metabolism; sphingolipid biosynthesis. Its function is as follows. Bifunctional enzyme which acts both as a sphingolipid delta(4)-desaturase and a sphingolipid C4-monooxygenase. This is Sphingolipid delta(4)-desaturase/C4-monooxygenase DES2 from Rattus norvegicus (Rat).